Here is a 115-residue protein sequence, read N- to C-terminus: NADH-ubiquinone oxidoreductase chain 3 (115 aa).

The next 3 membrane-spanning stretches (helical) occupy residues 4–24, 55–75, and 87–107; these read FIVLLVNISLASCLILIAFWL, FFLVAITFLLFDLEIALLLPL, and TMLTSFILVSVLAMGLAYEWL.

Belongs to the complex I subunit 3 family. As to quaternary structure, core subunit of respiratory chain NADH dehydrogenase (Complex I) which is composed of 45 different subunits. Interacts with TMEM186. Interacts with TMEM242.

Its subcellular location is the mitochondrion inner membrane. The catalysed reaction is a ubiquinone + NADH + 5 H(+)(in) = a ubiquinol + NAD(+) + 4 H(+)(out). Functionally, core subunit of the mitochondrial membrane respiratory chain NADH dehydrogenase (Complex I) which catalyzes electron transfer from NADH through the respiratory chain, using ubiquinone as an electron acceptor. Essential for the catalytic activity of complex I. The polypeptide is NADH-ubiquinone oxidoreductase chain 3 (Reithrodontomys megalotis (Western harvest mouse)).